The sequence spans 443 residues: Proline--tRNA ligase (443 aa).

This sequence belongs to the class-II aminoacyl-tRNA synthetase family. ProS type 2 subfamily. In terms of assembly, homodimer.

Its subcellular location is the cytoplasm. It carries out the reaction tRNA(Pro) + L-proline + ATP = L-prolyl-tRNA(Pro) + AMP + diphosphate. In terms of biological role, catalyzes the attachment of proline to tRNA(Pro) in a two-step reaction: proline is first activated by ATP to form Pro-AMP and then transferred to the acceptor end of tRNA(Pro). This is Proline--tRNA ligase from Caulobacter vibrioides (strain ATCC 19089 / CIP 103742 / CB 15) (Caulobacter crescentus).